The following is a 387-amino-acid chain: Carboxynorspermidine/carboxyspermidine decarboxylase (387 aa).

The residue at position 51 (K51) is an N6-(pyridoxal phosphate)lysine. Substrate contacts are provided by E248 and D284.

This sequence belongs to the Orn/Lys/Arg decarboxylase class-II family. NspC subfamily. As to quaternary structure, homodimer. Pyridoxal 5'-phosphate is required as a cofactor.

The protein localises to the cytoplasm. The catalysed reaction is carboxynorspermidine + H(+) = norspermidine + CO2. It catalyses the reaction carboxyspermidine + H(+) = spermidine + CO2. In terms of biological role, catalyzes the decarboxylation of carboxynorspermidine and carboxyspermidine. Essential for biofilm formation. This chain is Carboxynorspermidine/carboxyspermidine decarboxylase, found in Vibrio cholerae serotype O1 (strain ATCC 39315 / El Tor Inaba N16961).